Consider the following 339-residue polypeptide: Glycerol-3-phosphate dehydrogenase [NAD(P)+] (339 aa).

NADPH-binding residues include Ser15, Tyr16, His36, and Lys110. Sn-glycerol 3-phosphate-binding residues include Lys110, Gly139, and Thr141. Ala143 is an NADPH binding site. Lys195, Asp248, Ser258, Arg259, and Asn260 together coordinate sn-glycerol 3-phosphate. Lys195 (proton acceptor) is an active-site residue. Position 259 (Arg259) interacts with NADPH. NADPH is bound by residues Val283 and Glu285.

The protein belongs to the NAD-dependent glycerol-3-phosphate dehydrogenase family.

Its subcellular location is the cytoplasm. It catalyses the reaction sn-glycerol 3-phosphate + NAD(+) = dihydroxyacetone phosphate + NADH + H(+). It carries out the reaction sn-glycerol 3-phosphate + NADP(+) = dihydroxyacetone phosphate + NADPH + H(+). The protein operates within membrane lipid metabolism; glycerophospholipid metabolism. In terms of biological role, catalyzes the reduction of the glycolytic intermediate dihydroxyacetone phosphate (DHAP) to sn-glycerol 3-phosphate (G3P), the key precursor for phospholipid synthesis. The chain is Glycerol-3-phosphate dehydrogenase [NAD(P)+] from Serratia proteamaculans (strain 568).